Here is a 66-residue protein sequence, read N- to C-terminus: Large ribosomal subunit protein uL30 (66 aa).

This sequence belongs to the universal ribosomal protein uL30 family. In terms of assembly, part of the 50S ribosomal subunit.

In Chelativorans sp. (strain BNC1), this protein is Large ribosomal subunit protein uL30.